The chain runs to 109 residues: Small ribosomal subunit protein uS17 (109 aa).

Belongs to the universal ribosomal protein uS17 family. Part of the 30S ribosomal subunit.

Its function is as follows. One of the primary rRNA binding proteins, it binds specifically to the 5'-end of 16S ribosomal RNA. The polypeptide is Small ribosomal subunit protein uS17 (Thermoplasma acidophilum (strain ATCC 25905 / DSM 1728 / JCM 9062 / NBRC 15155 / AMRC-C165)).